The following is a 364-amino-acid chain: MTEKEVLESPKPSFPAETRQSGLQRLKQLLRKGSTGTKEMELPPEPQANGEAVGAGGGPIYYIYEEEEEEEEEEEEPPPEPPKLVNDKPHKFKDHFFKKPKFCDVCARMIVLNNKFGLRCKNCKTNIHEHCQSYVEMQRCFGKIPPGFHRAYSSPLYSNQQYACVKDLSAANRNDPVFETLRTGVIMANKERKKGQADKKNPVAAMMEEEPESARPEEGKPQDGNPEGDKKAEKKTPDDKHKQPGFQQSHYFVALYRFKALEKDDLDFPPGEKITVIDDSNEEWWRGKIGEKVGFFPPNFIIRVRAGERVHRVTRSFVGNREIGQITLKKDQIVVQKGDEAGGYVKVYTGRKVGLFPTDFLEEI.

Disordered regions lie at residues 1–89 (MTEK…NDKP) and 189–244 (NKER…HKQP). A compositionally biased stretch (acidic residues) spans 64–78 (YEEEEEEEEEEEEPP). Residues 89–140 (PHKFKDHFFKKPKFCDVCARMIVLNNKFGLRCKNCKTNIHEHCQSYVEMQRC) form a Phorbol-ester/DAG-type zinc finger. The span at 212-242 (ESARPEEGKPQDGNPEGDKKAEKKTPDDKHK) shows a compositional bias: basic and acidic residues. SH3 domains lie at 247 to 306 (QQSH…RVRA) and 307 to 364 (GERV…LEEI).

As to quaternary structure, interacts (via SH3 domains) with the calcium channels CACNA1S and CACNA1C. Component of a calcium channel complex with CACNA1S and CACNB1. Component of a calcium channel complex with CACNA1C and CACNB1.

Its subcellular location is the cytoplasm. The protein localises to the cell membrane. It localises to the sarcolemma. It is found in the T-tubule. In terms of biological role, required for normal excitation-contraction coupling in skeletal muscle and for normal muscle contraction in response to membrane depolarization. Required for normal Ca(2+) release from the sarcplasmic reticulum, which ultimately leads to muscle contraction. Probably functions via its effects on muscle calcium channels. Increases CACNA1S channel activity, in addition to its role in enhancing the expression of CACNA1S at the cell membrane. Has a redundant role in promoting the expression of the calcium channel CACNA1S at the cell membrane. Slows down the inactivation rate of the calcium channel CACNA1C. In Homo sapiens (Human), this protein is SH3 and cysteine-rich domain-containing protein 3 (STAC3).